The sequence spans 428 residues: Tyrosine--tRNA ligase (428 aa).

Residue tyrosine 41 participates in L-tyrosine binding. The short motif at 46–55 is the 'HIGH' region element; that stretch reads PTADSLHLGH. L-tyrosine-binding residues include tyrosine 179 and glutamine 183. The short motif at 239 to 243 is the 'KMSKS' region element; it reads KFGKT. Lysine 242 lines the ATP pocket. The S4 RNA-binding domain occupies 361–418; sequence TDLMQALVDAELQPSRGQARKTIASNAVTINGEKQSDPEYIFNDEDRLFGRYTLLRRG.

This sequence belongs to the class-I aminoacyl-tRNA synthetase family. TyrS type 1 subfamily. Homodimer.

The protein localises to the cytoplasm. The catalysed reaction is tRNA(Tyr) + L-tyrosine + ATP = L-tyrosyl-tRNA(Tyr) + AMP + diphosphate + H(+). Functionally, catalyzes the attachment of tyrosine to tRNA(Tyr) in a two-step reaction: tyrosine is first activated by ATP to form Tyr-AMP and then transferred to the acceptor end of tRNA(Tyr). This is Tyrosine--tRNA ligase from Salmonella arizonae (strain ATCC BAA-731 / CDC346-86 / RSK2980).